The following is a 307-amino-acid chain: Aspartate carbamoyltransferase catalytic subunit (307 aa).

2 residues coordinate carbamoyl phosphate: arginine 54 and threonine 55. Lysine 83 lines the L-aspartate pocket. The carbamoyl phosphate site is built by arginine 104, histidine 132, and glutamine 135. Residues arginine 165 and arginine 228 each contribute to the L-aspartate site. Residues leucine 267 and proline 268 each coordinate carbamoyl phosphate.

This sequence belongs to the aspartate/ornithine carbamoyltransferase superfamily. ATCase family. In terms of assembly, heterododecamer (2C3:3R2) of six catalytic PyrB chains organized as two trimers (C3), and six regulatory PyrI chains organized as three dimers (R2).

The catalysed reaction is carbamoyl phosphate + L-aspartate = N-carbamoyl-L-aspartate + phosphate + H(+). It participates in pyrimidine metabolism; UMP biosynthesis via de novo pathway; (S)-dihydroorotate from bicarbonate: step 2/3. Catalyzes the condensation of carbamoyl phosphate and aspartate to form carbamoyl aspartate and inorganic phosphate, the committed step in the de novo pyrimidine nucleotide biosynthesis pathway. This is Aspartate carbamoyltransferase catalytic subunit from Clostridium botulinum (strain Langeland / NCTC 10281 / Type F).